We begin with the raw amino-acid sequence, 226 residues long: Enolase-phosphatase E1 (226 aa).

This sequence belongs to the HAD-like hydrolase superfamily. MasA/MtnC family. Monomer. Mg(2+) is required as a cofactor.

The enzyme catalyses 5-methylsulfanyl-2,3-dioxopentyl phosphate + H2O = 1,2-dihydroxy-5-(methylsulfanyl)pent-1-en-3-one + phosphate. Its pathway is amino-acid biosynthesis; L-methionine biosynthesis via salvage pathway; L-methionine from S-methyl-5-thio-alpha-D-ribose 1-phosphate: step 3/6. The protein operates within amino-acid biosynthesis; L-methionine biosynthesis via salvage pathway; L-methionine from S-methyl-5-thio-alpha-D-ribose 1-phosphate: step 4/6. Functionally, bifunctional enzyme that catalyzes the enolization of 2,3-diketo-5-methylthiopentyl-1-phosphate (DK-MTP-1-P) into the intermediate 2-hydroxy-3-keto-5-methylthiopentenyl-1-phosphate (HK-MTPenyl-1-P), which is then dephosphorylated to form the acireductone 1,2-dihydroxy-3-keto-5-methylthiopentene (DHK-MTPene). The chain is Enolase-phosphatase E1 from Shewanella sp. (strain W3-18-1).